The sequence spans 69 residues: Dodecin (69 aa).

3-5 (KVY) contributes to the FMN binding site. Residues Lys-6, Arg-28, and 32 to 34 (TLR) contribute to the CoA site. The FMN site is built by Asp-37, Trp-38, Arg-45, Gln-57, and Arg-65. Residue 65-67 (RLE) participates in CoA binding.

This sequence belongs to the dodecin family. Homododecamer; four homotrimers assemble to form a dodecameric hollow sphere with an outer diameter of about 60 Angstroms. Flavin dimers are bound between subunits with a stoichiometry of 6 flavin dimers per dodecamer. Besides, trimeric coenzyme A molecules can be bound between subunits. A dodecamer can bind simultaneously 12 flavin and 12 coenzyme A molecules.

Its function is as follows. May function as storage protein that sequesters various flavins and other cofactors, thereby protecting the cell against undesirable reactions mediated by the free cofactors. Binds and sequesters FMN, FAD, lumiflavin and lumichrome, and can also bind coenzyme A. This is Dodecin from Thermus thermophilus (strain ATCC 27634 / DSM 579 / HB8).